We begin with the raw amino-acid sequence, 358 residues long: Phospho-N-acetylmuramoyl-pentapeptide-transferase (358 aa).

Helical transmembrane passes span alanine 28 to leucine 48, threonine 70 to alanine 90, leucine 92 to phenylalanine 112, methionine 133 to tyrosine 153, valine 165 to serine 185, glycine 196 to threonine 216, valine 233 to phenylalanine 253, valine 260 to leucine 280, leucine 285 to valine 305, and lysine 335 to leucine 355.

This sequence belongs to the glycosyltransferase 4 family. MraY subfamily. It depends on Mg(2+) as a cofactor.

Its subcellular location is the cell inner membrane. It carries out the reaction UDP-N-acetyl-alpha-D-muramoyl-L-alanyl-gamma-D-glutamyl-meso-2,6-diaminopimeloyl-D-alanyl-D-alanine + di-trans,octa-cis-undecaprenyl phosphate = di-trans,octa-cis-undecaprenyl diphospho-N-acetyl-alpha-D-muramoyl-L-alanyl-D-glutamyl-meso-2,6-diaminopimeloyl-D-alanyl-D-alanine + UMP. The protein operates within cell wall biogenesis; peptidoglycan biosynthesis. Functionally, catalyzes the initial step of the lipid cycle reactions in the biosynthesis of the cell wall peptidoglycan: transfers peptidoglycan precursor phospho-MurNAc-pentapeptide from UDP-MurNAc-pentapeptide onto the lipid carrier undecaprenyl phosphate, yielding undecaprenyl-pyrophosphoryl-MurNAc-pentapeptide, known as lipid I. The sequence is that of Phospho-N-acetylmuramoyl-pentapeptide-transferase from Desulfovibrio desulfuricans (strain ATCC 27774 / DSM 6949 / MB).